The primary structure comprises 616 residues: Kelch-like protein 36 (616 aa).

The BTB domain maps to Cys-46–Gly-113. Residues Tyr-148–Lys-250 enclose the BACK domain. 6 Kelch repeats span residues Cys-296–Gly-345, Phe-346–Asp-397, Met-398–Asp-444, Val-446–Asp-493, Ser-494–Gly-546, and Arg-547–Leu-595.

As to quaternary structure, interacts with CUL3.

It participates in protein modification; protein ubiquitination. Probable substrate-specific adapter of an E3 ubiquitin-protein ligase complex which mediates the ubiquitination and subsequent proteasomal degradation of target proteins. The sequence is that of Kelch-like protein 36 (KLHL36) from Bos taurus (Bovine).